Reading from the N-terminus, the 464-residue chain is Argininosuccinate lyase (464 aa).

This sequence belongs to the lyase 1 family. Argininosuccinate lyase subfamily.

Its subcellular location is the cytoplasm. It carries out the reaction 2-(N(omega)-L-arginino)succinate = fumarate + L-arginine. The protein operates within amino-acid biosynthesis; L-arginine biosynthesis; L-arginine from L-ornithine and carbamoyl phosphate: step 3/3. The polypeptide is Argininosuccinate lyase (Ectopseudomonas mendocina (strain ymp) (Pseudomonas mendocina)).